The sequence spans 876 residues: ATPase WRNIP1 (876 aa).

Low complexity-rich tracts occupy residues 56-85 (NKSN…TPTK) and 104-175 (NNNN…INNN). The interval 56–175 (NKSNGNNSIN…NNNNNNINNN (120 aa)) is disordered. An ATP-binding site is contributed by 240 to 246 (PGCGKTT). 3 disordered regions span residues 621-647 (KDRQ…PQQQ), 714-737 (INNK…LNPT), and 833-876 (ETKA…SLDF). 2 stretches are compositionally biased toward low complexity: residues 626-647 (SQDQ…PQQQ) and 714-731 (INNK…VNNS). The span at 835 to 849 (KAISSTDTKESVSIN) shows a compositional bias: polar residues. The segment covering 850–863 (DSDKDLTTTHKNEQ) has biased composition (basic and acidic residues).

This sequence belongs to the AAA ATPase family. RarA/MGS1/WRNIP1 subfamily.

It is found in the nucleus. It catalyses the reaction ATP + H2O = ADP + phosphate + H(+). Functionally, functions as a modulator for initiation or reinitiation events during DNA polymerase delta-mediated DNA synthesis. Has an intrinsic ATPase activity that functions as a sensor of DNA damage or of arrested replication forks and regulates the extent of DNA synthesis. This Dictyostelium discoideum (Social amoeba) protein is ATPase WRNIP1.